The primary structure comprises 190 residues: Vascular endothelial growth factor A (190 aa).

Residues 1-26 form the signal peptide; it reads MNFLLSWVHWSLALLLYLHHAKWSQA. 3 cysteine pairs are disulfide-bonded: C51–C93, C82–C127, and C86–C129. N100 is a glycosylation site (N-linked (GlcNAc...) asparagine).

This sequence belongs to the PDGF/VEGF growth factor family. In terms of assembly, homodimer; disulfide-linked. Also found as heterodimer with PGF. Interacts with NRP1. Interacts with BSG. Interacts with CD82; this interaction inhibits VEGFA-mediated signaling pathway.

It localises to the secreted. Growth factor active in angiogenesis, vasculogenesis and endothelial cell growth. Induces endothelial cell proliferation, promotes cell migration, inhibits apoptosis and induces permeabilization of blood vessels. Binds to the FLT1/VEGFR1 and KDR/VEGFR2 receptors, heparan sulfate and heparin. Binding to NRP1 receptor initiates a signaling pathway needed for motor neuron axon guidance and cell body migration, including for the caudal migration of facial motor neurons from rhombomere 4 to rhombomere 6 during embryonic development. Also binds the DEAR/FBXW7-AS1 receptor. This chain is Vascular endothelial growth factor A (VEGFA), found in Bos taurus (Bovine).